The chain runs to 390 residues: Outer membrane protein assembly factor BamB (390 aa).

The signal sequence occupies residues 1-25 (MPVLRDRIPRRGFFLGLALLAALSG). A lipid anchor (N-palmitoyl cysteine) is attached at cysteine 26. The S-diacylglycerol cysteine moiety is linked to residue cysteine 26.

It belongs to the BamB family. Part of the Bam complex.

The protein resides in the cell outer membrane. In terms of biological role, part of the outer membrane protein assembly complex, which is involved in assembly and insertion of beta-barrel proteins into the outer membrane. This is Outer membrane protein assembly factor BamB from Marinobacter adhaerens (strain DSM 23420 / HP15).